The sequence spans 248 residues: Probable phosphatase VFMJ11_A0899 (248 aa).

9 residues coordinate Zn(2+): H8, H10, H16, H41, E74, H101, H131, D193, and H195.

The protein belongs to the PHP family. Zn(2+) serves as cofactor.

In Aliivibrio fischeri (strain MJ11) (Vibrio fischeri), this protein is Probable phosphatase VFMJ11_A0899.